Reading from the N-terminus, the 386-residue chain is Methionine aminopeptidase 1 (386 aa).

The segment at 6–59 (TRECETEGCHSEAKLQCPTCIKLGIQGSYFCSQECFKGSWATHKLLHKKAKEDK) adopts a C6H2-type zinc-finger fold. Residues cysteine 9, cysteine 14, cysteine 22, cysteine 25, cysteine 36, cysteine 40, histidine 48, and histidine 52 each contribute to the Zn(2+) site. A protein is bound at residue histidine 202. Residues aspartate 219, aspartate 230, and histidine 293 each contribute to the Zn(2+) site. An a protein-binding site is contributed by histidine 300. Zn(2+)-binding residues include glutamate 326 and glutamate 357.

Belongs to the peptidase M24A family. Methionine aminopeptidase type 1 subfamily. Associates with the 60S ribosomal subunit of the 80S translational complex. Zn(2+) is required as a cofactor. The cofactor is Co(2+). Requires Mn(2+) as cofactor. Fe(2+) serves as cofactor.

It localises to the cytoplasm. It catalyses the reaction Release of N-terminal amino acids, preferentially methionine, from peptides and arylamides.. Cotranslationally removes the N-terminal methionine from nascent proteins. The N-terminal methionine is often cleaved when the second residue in the primary sequence is small and uncharged (Met-Ala-, Cys, Gly, Pro, Ser, Thr, or Val). This is Methionine aminopeptidase 1 (metap1) from Danio rerio (Zebrafish).